A 606-amino-acid polypeptide reads, in one-letter code: MAIRQLSETLINQIAAGEVIERPASAAKELIENALDAGATRIEIATAGGGKALLRVSDNGSGMEATDLELAVRRHCTSKISETLEDIRTLGFRGEALPSIGSVARLNIASRRRDSAGGHEIAVAGGKIVHIRPAAANPGTIVEVRDLFFATPARLKFLKSEKAEAGAITEIVKRMAIAFPAVRFVLSGSDRTTLEFPATGDDHLARMAQVLGKEFRDNAILLDAVREDISLTGFAGVPTFNRGNSAHQYAFVNGRPVQDKLILSAIRGAYAETIPSGRYPVAVLSITLDPALVDVNVHPAKSDVRFRDPGLVRGLIVGAIREALARDGSRAATTGASDMLRAFRPGFQPHAQRPQAPWSAETSPFRPYPPAAGFSERPQASFDRLSMPTARAELQPSPQPGAPEPAASAETTGRYPLGAARAQIHANYIVAQTEDGLVIVDQHAAHERLVFEAMRKALHSKRLASQVLLIPEIIDLPEEDCDRLMQHAAELSELGLAIERFGPGAIAVRETPAMLGEVDAHGLIRQLADEIAEWDTASGLSAKLEYVAATMACHGSVRSGRRLRPEEMNALLREMEVTPGSGQCNHGRPTYIELKLSDIERLFGRS.

The tract at residues 348–378 (QPHAQRPQAPWSAETSPFRPYPPAAGFSERP) is disordered.

It belongs to the DNA mismatch repair MutL/HexB family.

Its function is as follows. This protein is involved in the repair of mismatches in DNA. It is required for dam-dependent methyl-directed DNA mismatch repair. May act as a 'molecular matchmaker', a protein that promotes the formation of a stable complex between two or more DNA-binding proteins in an ATP-dependent manner without itself being part of a final effector complex. The sequence is that of DNA mismatch repair protein MutL from Rhizobium etli (strain CIAT 652).